Here is a 141-residue protein sequence, read N- to C-terminus: MRQRTIVCPLIQNDGAYLLCKMADDRGVFPGQWAISGGGVEPGERIEEALRREIREELGEQLLLTEITPWTFSDDIRTKTYADGRKEEIYMIYLIFDCVSANREVKINEEFQDYAWVKPEDLVHYDLNVATRKTLRLKGLL.

Residues 1-141 enclose the Nudix hydrolase domain; it reads MRQRTIVCPL…RKTLRLKGLL (141 aa). Residues 38–59 carry the Nudix box motif; the sequence is GGVEPGERIEEALRREIREELG.

The protein belongs to the Nudix hydrolase family. NudI subfamily. Monomer. The cofactor is Mg(2+).

It carries out the reaction a ribonucleoside 5'-triphosphate + H2O = a ribonucleoside 5'-phosphate + diphosphate + H(+). It catalyses the reaction a 2'-deoxyribonucleoside 5'-triphosphate + H2O = a 2'-deoxyribonucleoside 5'-phosphate + diphosphate + H(+). The enzyme catalyses dUTP + H2O = dUMP + diphosphate + H(+). The catalysed reaction is dTTP + H2O = dTMP + diphosphate + H(+). It carries out the reaction dCTP + H2O = dCMP + diphosphate + H(+). Catalyzes the hydrolysis of nucleoside triphosphates, with a preference for pyrimidine deoxynucleoside triphosphates (dUTP, dTTP and dCTP). In Escherichia coli (strain ATCC 8739 / DSM 1576 / NBRC 3972 / NCIMB 8545 / WDCM 00012 / Crooks), this protein is Nucleoside triphosphatase NudI.